Reading from the N-terminus, the 855-residue chain is Nuclear valosin-containing protein-like (855 aa).

Positions 1–219 are interaction with RPL5; sequence MKPRPGVFVD…SLLESDKKRK (219 aa). The short motif at 49-52 is the Nucleolar localization signal element; sequence RRKR. Lys70 is subject to N6-acetyllysine. The disordered stretch occupies residues 83 to 234; that stretch reads LAKRARQDEE…KGNKRKTENL (152 aa). Positions 85–88 match the Nuclear localization signal motif; the sequence is KRAR. Residues 90-110 show a composition bias toward acidic residues; it reads DEEDEYTESYSDDDSNMEDYP. 2 stretches are compositionally biased toward polar residues: residues 113 to 123 and 131 to 157; these read QSANPMNSSLL and SESVSTTPKWGQREATTSTPLLTSKTG. Ser133 carries the phosphoserine modification. Thr137 bears the Phosphothreonine mark. Lys155 is modified (N6-acetyllysine). Ser190 is subject to Phosphoserine. Lys207 participates in a covalent cross-link: Glycyl lysine isopeptide (Lys-Gly) (interchain with G-Cter in SUMO2). A phosphoserine mark is found at Ser210 and Ser214. Residues 217 to 228 are compositionally biased toward basic residues; sequence KRKGRAKGKGNK. Residues 217–231 carry the Nuclear localization signal motif; sequence KRKGRAKGKGNKRKT. An interaction with WDR74 region spans residues 266 to 473; the sequence is VGGNDATLKE…LTPGFVGADL (208 aa). 304–311 is an ATP binding site; it reads GPPGCGKT. Residues 496–523 are disordered; it reads QKKKPEIEGLPSEGDQEERLGAEPTSET. 621–628 lines the ATP pocket; it reads GPPGCGKT.

Belongs to the AAA ATPase family. Interacts with NCL/nucleolin. Isoform 1 and isoform 2 interact with TERT and isoform 1 exhibits a higher binding affinity for TERT compared to isoform 2. Isoform 1 interacts with MTREX in an ATP-dependent manner; the interaction is required to associate NVL with nuclear RNA exosome. Isoform 1 interacts with RPL5 in an ATP-dependent manner. Interacts with WDR74 (through WDR repeats); the interaction is independent of RNA or pre-60S ribosome particles.

It localises to the nucleus. It is found in the nucleolus. Its subcellular location is the nucleoplasm. Functionally, participates in the assembly of the telomerase holoenzyme and effecting of telomerase activity via its interaction with TERT. Involved in both early and late stages of the pre-rRNA processing pathways. Spatiotemporally regulates 60S ribosomal subunit biogenesis in the nucleolus. Catalyzes the release of specific assembly factors, such as WDR74, from pre-60S ribosomal particles through the ATPase activity. This Mus musculus (Mouse) protein is Nuclear valosin-containing protein-like.